The chain runs to 303 residues: Putative 1-phosphofructokinase (303 aa).

ATP is bound by residues 217–222 (SDGDKG) and 249–250 (GD). Residue Asp250 is the Proton acceptor of the active site.

It belongs to the carbohydrate kinase PfkB family.

It catalyses the reaction beta-D-fructose 1-phosphate + ATP = beta-D-fructose 1,6-bisphosphate + ADP + H(+). Catalyzes the ATP-dependent phosphorylation of fructose-l-phosphate to fructose-l,6-bisphosphate. This is Putative 1-phosphofructokinase (fruK) from Mycoplasma genitalium (strain ATCC 33530 / DSM 19775 / NCTC 10195 / G37) (Mycoplasmoides genitalium).